The primary structure comprises 197 residues: GTP cyclohydrolase-2 (197 aa).

49–53 lines the GTP pocket; it reads RVHSE. Zn(2+) is bound by residues Cys54, Cys65, and Cys67. GTP-binding positions include Gln70, 92–94, and Thr114; that span reads EGR. Asp126 acts as the Proton acceptor in catalysis. The Nucleophile role is filled by Arg128. Residues Thr149 and Lys154 each contribute to the GTP site.

It belongs to the GTP cyclohydrolase II family. As to quaternary structure, homodimer. Zn(2+) is required as a cofactor.

The catalysed reaction is GTP + 4 H2O = 2,5-diamino-6-hydroxy-4-(5-phosphoribosylamino)-pyrimidine + formate + 2 phosphate + 3 H(+). The protein operates within cofactor biosynthesis; riboflavin biosynthesis; 5-amino-6-(D-ribitylamino)uracil from GTP: step 1/4. In terms of biological role, catalyzes the conversion of GTP to 2,5-diamino-6-ribosylamino-4(3H)-pyrimidinone 5'-phosphate (DARP), formate and pyrophosphate. This chain is GTP cyclohydrolase-2, found in Pectobacterium atrosepticum (strain SCRI 1043 / ATCC BAA-672) (Erwinia carotovora subsp. atroseptica).